We begin with the raw amino-acid sequence, 476 residues long: Siroheme synthase (476 aa).

The precorrin-2 dehydrogenase /sirohydrochlorin ferrochelatase stretch occupies residues 1–204 (MDYFPVFLNI…GKDQAAQDYL (204 aa)). NAD(+) contacts are provided by residues 22-23 (SV) and 43-44 (PT). The residue at position 129 (Ser-129) is a Phosphoserine. A uroporphyrinogen-III C-methyltransferase region spans residues 218 to 476 (GEVYLVGAGP…GNTPGYSKHP (259 aa)). Pro-227 contributes to the S-adenosyl-L-methionine binding site. Residue Asp-250 is the Proton acceptor of the active site. The active-site Proton donor is the Lys-272. S-adenosyl-L-methionine is bound by residues 303–305 (GGD), Ile-308, 333–334 (TA), Met-385, and Gly-414.

In the N-terminal section; belongs to the precorrin-2 dehydrogenase / sirohydrochlorin ferrochelatase family. This sequence in the C-terminal section; belongs to the precorrin methyltransferase family.

The catalysed reaction is uroporphyrinogen III + 2 S-adenosyl-L-methionine = precorrin-2 + 2 S-adenosyl-L-homocysteine + H(+). It carries out the reaction precorrin-2 + NAD(+) = sirohydrochlorin + NADH + 2 H(+). The enzyme catalyses siroheme + 2 H(+) = sirohydrochlorin + Fe(2+). The protein operates within cofactor biosynthesis; adenosylcobalamin biosynthesis; precorrin-2 from uroporphyrinogen III: step 1/1. Its pathway is cofactor biosynthesis; adenosylcobalamin biosynthesis; sirohydrochlorin from precorrin-2: step 1/1. It functions in the pathway porphyrin-containing compound metabolism; siroheme biosynthesis; precorrin-2 from uroporphyrinogen III: step 1/1. It participates in porphyrin-containing compound metabolism; siroheme biosynthesis; siroheme from sirohydrochlorin: step 1/1. The protein operates within porphyrin-containing compound metabolism; siroheme biosynthesis; sirohydrochlorin from precorrin-2: step 1/1. Functionally, multifunctional enzyme that catalyzes the SAM-dependent methylations of uroporphyrinogen III at position C-2 and C-7 to form precorrin-2 via precorrin-1. Then it catalyzes the NAD-dependent ring dehydrogenation of precorrin-2 to yield sirohydrochlorin. Finally, it catalyzes the ferrochelation of sirohydrochlorin to yield siroheme. The protein is Siroheme synthase of Nitrosomonas eutropha (strain DSM 101675 / C91 / Nm57).